The primary structure comprises 485 residues: Glycogen synthase (485 aa).

Lysine 15 provides a ligand contact to ADP-alpha-D-glucose.

The protein belongs to the glycosyltransferase 1 family. Bacterial/plant glycogen synthase subfamily.

The catalysed reaction is [(1-&gt;4)-alpha-D-glucosyl](n) + ADP-alpha-D-glucose = [(1-&gt;4)-alpha-D-glucosyl](n+1) + ADP + H(+). Its pathway is glycan biosynthesis; glycogen biosynthesis. Synthesizes alpha-1,4-glucan chains using ADP-glucose. This Geobacillus thermodenitrificans (strain NG80-2) protein is Glycogen synthase.